A 159-amino-acid polypeptide reads, in one-letter code: Large ribosomal subunit protein uL23m (159 aa).

It belongs to the universal ribosomal protein uL23 family. In terms of assembly, component of the mitochondrial ribosome large subunit (39S) which comprises a 16S rRNA and about 50 distinct proteins.

It is found in the mitochondrion. The protein is Large ribosomal subunit protein uL23m (mrpl-23) of Caenorhabditis briggsae.